The following is a 165-amino-acid chain: Ubiquitin-like protein ISG15 (165 aa).

2 consecutive Ubiquitin-like domains span residues 2-78 (GWDL…VDKC) and 79-157 (DEPL…LRGG). Position 78 is an S-nitrosocysteine; alternate (C78). Positions 152–157 (LRLRGG) match the LRLRGG motif. An involved in the ligation of specific target proteins region spans residues 153–157 (RLRGG). G157 is covalently cross-linked (Glycyl lysine isopeptide (Gly-Lys) (interchain with K-? in acceptor proteins)). Residues 158-165 (GTEPGGRS) constitute a propeptide, removed in mature form.

In terms of assembly, homodimer; disulfide-linked. Interacts with, and is conjugated to its targets by UBE1L (E1 enzyme) and UBE2E2 (E2 enzyme). Interacts with NEDD4. Interacts with PARP12; this interaction inhibits PINK1/Parkin-dependent mitophagy. (Microbial infection) Interacts with vaccinia virus protein E3. As to quaternary structure, (Microbial infection) Interaction with influenza B NS1 protein inhibits its conjugation. In terms of assembly, (Microbial infection) Interacts (via C-terminus) with Crimean-Congo hemorrhagic fever virus (CCHFV) RNA-directed RNA polymerase L (via N-terminus); the deISGylase activity of the viral protein interferes with antiviral signaling pathways mediated by NF-kappaB and IRF signalings. (Microbial infection) Interacts with human cytomegalovirus protein UL26; this interaction inhibits global protein ISGylation. S-nitrosylation decreases its dimerization, thereby increasing the availability as well as the solubility of monomeric ISG15 for its conjugation to cellular proteins. In terms of processing, induced as an inactive, precursor protein that is cleaved by specific proteases to expose the C-terminal diglycine (LRLRGG) motif. This motif is essential not only for its conjugation to substrates but also for its recognition by the relevant processing proteases. As to expression, detected in lymphoid cells, striated and smooth muscle, several epithelia and neurons. Expressed in neutrophils, monocytes and lymphocytes. Enhanced expression seen in pancreatic adenocarcinoma, endometrial cancer, and bladder cancer, as compared to non-cancerous tissue. In bladder cancer, the increase in expression exhibits a striking positive correlation with more advanced stages of the disease.

The protein resides in the cytoplasm. The protein localises to the secreted. In terms of biological role, ubiquitin-like protein which plays a key role in the innate immune response to viral infection either via its conjugation to a target protein (ISGylation) or via its action as a free or unconjugated protein. ISGylation involves a cascade of enzymatic reactions involving E1, E2, and E3 enzymes which catalyze the conjugation of ISG15 to a lysine residue in the target protein. Its target proteins include IFIT1, MX1/MxA, PPM1B, UBE2L6, UBA7, CHMP5, CHMP2A, CHMP4B and CHMP6. Isgylation of the viral sensor IFIH1/MDA5 promotes IFIH1/MDA5 oligomerization and triggers activation of innate immunity against a range of viruses, including coronaviruses, flaviviruses and picornaviruses. Can also isgylate: EIF2AK2/PKR which results in its activation, RIGI which inhibits its function in antiviral signaling response, EIF4E2 which enhances its cap structure-binding activity and translation-inhibition activity, UBE2N and UBE2E1 which negatively regulates their activity, IRF3 which inhibits its ubiquitination and degradation and FLNB which prevents its ability to interact with the upstream activators of the JNK cascade thereby inhibiting IFNA-induced JNK signaling. Exhibits antiviral activity towards both DNA and RNA viruses, including influenza A, HIV-1 and Ebola virus. Restricts HIV-1 and ebola virus via disruption of viral budding. Inhibits the ubiquitination of HIV-1 Gag and host TSG101 and disrupts their interaction, thereby preventing assembly and release of virions from infected cells. Inhibits Ebola virus budding mediated by the VP40 protein by disrupting ubiquitin ligase activity of NEDD4 and its ability to ubiquitinate VP40. ISGylates influenza A virus NS1 protein which causes a loss of function of the protein and the inhibition of virus replication. The secreted form of ISG15 can: induce natural killer cell proliferation, act as a chemotactic factor for neutrophils and act as a IFN-gamma-inducing cytokine playing an essential role in antimycobacterial immunity. The secreted form acts through the integrin ITGAL/ITGB2 receptor to initiate activation of SRC family tyrosine kinases including LYN, HCK and FGR which leads to secretion of IFNG and IL10; the interaction is mediated by ITGAL. The polypeptide is Ubiquitin-like protein ISG15 (Homo sapiens (Human)).